Here is a 404-residue protein sequence, read N- to C-terminus: High affinity immunoglobulin gamma Fc receptor I (404 aa).

Residues Met1–Gly24 form the signal peptide. Residues Glu25–Pro297 lie on the Extracellular side of the membrane. N-linked (GlcNAc...) asparagine glycosylation is found at Asn28, Asn48, Asn69, Asn168, and Asn249. Ig-like C2-type domains are found at residues Ala32–His111, Leu117–Val194, and Pro201–Glu286. Cystine bridges form between Cys53-Cys95, Cys134-Cys177, and Cys221-Cys269. Residues Val298 to Val320 form a helical membrane-spanning segment. The interval Lys321–Gly342 is interaction with EPB41L2. The Cytoplasmic segment spans residues Lys321–Ser404. The segment at Asn346–Ser404 is disordered. A Phosphoserine modification is found at Ser347. Thr368 carries the post-translational modification Phosphothreonine. The span at Ser394–Ser404 shows a compositional bias: polar residues.

This sequence belongs to the immunoglobulin superfamily. FCGR1 family. Interacts with FCERG1; forms a functional signaling complex. Interacts with FLNA; prevents FCGR1A degradation. Interacts with EPB41L2, LAT and PPL. Interacts with HCK and LYN. Post-translationally, N-glycosylated. In terms of processing, phosphorylated on serine residues. Macrophage-specific.

It is found in the cell membrane. Functionally, high affinity receptor for the Fc region of immunoglobulins gamma. Functions in both innate and adaptive immune responses. The chain is High affinity immunoglobulin gamma Fc receptor I (Fcgr1) from Mus musculus (Mouse).